The primary structure comprises 316 residues: Ribosomal RNA small subunit methyltransferase H (316 aa).

S-adenosyl-L-methionine-binding positions include 37–39 (GGH), aspartate 56, phenylalanine 83, aspartate 106, and histidine 113. Positions 276–316 (PILPSEEETKENPASRSAKLRVLRKTKSADKKYKKENSKEE) are disordered. Residues 302–316 (KSADKKYKKENSKEE) are compositionally biased toward basic and acidic residues.

It belongs to the methyltransferase superfamily. RsmH family.

It localises to the cytoplasm. It carries out the reaction cytidine(1402) in 16S rRNA + S-adenosyl-L-methionine = N(4)-methylcytidine(1402) in 16S rRNA + S-adenosyl-L-homocysteine + H(+). Functionally, specifically methylates the N4 position of cytidine in position 1402 (C1402) of 16S rRNA. The protein is Ribosomal RNA small subunit methyltransferase H of Leptospira borgpetersenii serovar Hardjo-bovis (strain L550).